A 285-amino-acid chain; its full sequence is NAD kinase (285 aa).

Asp66 acts as the Proton acceptor in catalysis. NAD(+) is bound by residues 66-67 (DG), 137-138 (ND), Arg148, Arg165, Asp167, and 178-183 (TAYSMS).

This sequence belongs to the NAD kinase family. A divalent metal cation is required as a cofactor.

The protein localises to the cytoplasm. The catalysed reaction is NAD(+) + ATP = ADP + NADP(+) + H(+). Involved in the regulation of the intracellular balance of NAD and NADP, and is a key enzyme in the biosynthesis of NADP. Catalyzes specifically the phosphorylation on 2'-hydroxyl of the adenosine moiety of NAD to yield NADP. This chain is NAD kinase, found in Chlorobium phaeobacteroides (strain DSM 266 / SMG 266 / 2430).